A 231-amino-acid polypeptide reads, in one-letter code: Ribosomal RNA small subunit methyltransferase nep-1 (231 aa).

Residues M161, G188, G193, and 206-211 each bind S-adenosyl-L-methionine; that span reads ISNYPL.

This sequence belongs to the class IV-like SAM-binding methyltransferase superfamily. RNA methyltransferase NEP1 family. Homodimer.

The protein localises to the nucleus. Its subcellular location is the nucleolus. It catalyses the reaction a pseudouridine in rRNA + S-adenosyl-L-methionine = an N(1)-methylpseudouridine in rRNA + S-adenosyl-L-homocysteine + H(+). In terms of biological role, S-adenosyl-L-methionine-dependent pseudouridine N(1)-methyltransferase that methylates a pseudouridine in 18S rRNA. Involved the biosynthesis of the hypermodified N1-methyl-N3-(3-amino-3-carboxypropyl) pseudouridine (m1acp3-Psi) conserved in eukaryotic 18S rRNA. Also has an essential role in 40S ribosomal subunit biogenesis independent on its methyltransferase activity, facilitating the incorporation of ribosomal protein S19 during the formation of pre-ribosomes. The polypeptide is Ribosomal RNA small subunit methyltransferase nep-1 (Caenorhabditis elegans).